The primary structure comprises 117 residues: Ribosome-binding factor A (117 aa).

This sequence belongs to the RbfA family. Monomer. Binds 30S ribosomal subunits, but not 50S ribosomal subunits or 70S ribosomes.

It is found in the cytoplasm. Its function is as follows. One of several proteins that assist in the late maturation steps of the functional core of the 30S ribosomal subunit. Associates with free 30S ribosomal subunits (but not with 30S subunits that are part of 70S ribosomes or polysomes). Required for efficient processing of 16S rRNA. May interact with the 5'-terminal helix region of 16S rRNA. The protein is Ribosome-binding factor A of Leptospira interrogans serogroup Icterohaemorrhagiae serovar copenhageni (strain Fiocruz L1-130).